Reading from the N-terminus, the 160-residue chain is Cyanate hydratase (160 aa).

Active-site residues include R100, E103, and S126.

Belongs to the cyanase family.

The enzyme catalyses cyanate + hydrogencarbonate + 3 H(+) = NH4(+) + 2 CO2. In terms of biological role, catalyzes the reaction of cyanate with bicarbonate to produce ammonia and carbon dioxide. The chain is Cyanate hydratase from Neosartorya fischeri (strain ATCC 1020 / DSM 3700 / CBS 544.65 / FGSC A1164 / JCM 1740 / NRRL 181 / WB 181) (Aspergillus fischerianus).